Consider the following 241-residue polypeptide: DnaA regulatory inactivator Hda (241 aa).

This sequence belongs to the DnaA family. HdA subfamily. As to quaternary structure, the active form seems to be an ADP-bound monomer. Forms the RIDA complex (regulatory inactivation of DnaA) of ATP-DnaA, ADP-Hda and the DNA-loaded beta sliding clamp (dnaN).

Its function is as follows. Mediates the interaction of DNA replication initiator protein DnaA with DNA polymerase subunit beta sliding clamp (dnaN). Stimulates hydrolysis of ATP-DnaA to ADP-DnaA, rendering DnaA inactive for reinitiation, a process called regulatory inhibition of DnaA or RIDA. The chain is DnaA regulatory inactivator Hda from Salmonella paratyphi A (strain ATCC 9150 / SARB42).